A 181-amino-acid polypeptide reads, in one-letter code: MATSIDLVEAERRYRTICSSWNECITFQQHQAAVEEYKELHQLLFPSSCQYIPGWLTPEQREAKKQAEIAKKLRKLELKEEFKFLIDSALSKSLTKISDQDINDLPWTFMSTLNGLVNPGKFGISNIFAGQKDISVQSKEKFELHVRRALDETFHWCIFPEKLDDFTKTFSEKLSFRLKYS.

This is an uncharacterized protein from Acanthamoeba polyphaga (Amoeba).